The sequence spans 243 residues: Pyridoxine 5'-phosphate synthase (243 aa).

3-amino-2-oxopropyl phosphate is bound at residue asparagine 9. 11–12 (DH) lines the 1-deoxy-D-xylulose 5-phosphate pocket. A 3-amino-2-oxopropyl phosphate-binding site is contributed by arginine 20. Histidine 45 serves as the catalytic Proton acceptor. Residues arginine 47 and histidine 52 each contribute to the 1-deoxy-D-xylulose 5-phosphate site. Catalysis depends on glutamate 72, which acts as the Proton acceptor. Threonine 102 is a binding site for 1-deoxy-D-xylulose 5-phosphate. Residue histidine 193 is the Proton donor of the active site. 3-amino-2-oxopropyl phosphate-binding positions include glycine 194 and 215–216 (GH).

It belongs to the PNP synthase family. As to quaternary structure, homooctamer; tetramer of dimers.

It localises to the cytoplasm. It catalyses the reaction 3-amino-2-oxopropyl phosphate + 1-deoxy-D-xylulose 5-phosphate = pyridoxine 5'-phosphate + phosphate + 2 H2O + H(+). It participates in cofactor biosynthesis; pyridoxine 5'-phosphate biosynthesis; pyridoxine 5'-phosphate from D-erythrose 4-phosphate: step 5/5. Catalyzes the complicated ring closure reaction between the two acyclic compounds 1-deoxy-D-xylulose-5-phosphate (DXP) and 3-amino-2-oxopropyl phosphate (1-amino-acetone-3-phosphate or AAP) to form pyridoxine 5'-phosphate (PNP) and inorganic phosphate. This is Pyridoxine 5'-phosphate synthase from Shigella sonnei (strain Ss046).